Reading from the N-terminus, the 110-residue chain is Small ubiquitin-related modifier 3 (110 aa).

Glycyl lysine isopeptide (Lys-Gly) (interchain with G-Cter in SUMO2) cross-links involve residues lysine 5 and lysine 7. Lysine 11 is covalently cross-linked (Glycyl lysine isopeptide (Lys-Gly) (interchain with G-Cter in SUMO); alternate). Residue lysine 11 forms a Glycyl lysine isopeptide (Lys-Gly) (interchain with G-Cter in SUMO2); alternate linkage. Residues 15 to 92 form the Ubiquitin-like domain; the sequence is DHINLKVAGQ…IDVFQQQTGG (78 aa). Residues 89-101 are compositionally biased toward polar residues; it reads QTGGTASRASVPT. The interval 89–110 is disordered; that stretch reads QTGGTASRASVPTPSHFPDICY. Glycine 92 is covalently cross-linked (Glycyl lysine isopeptide (Gly-Lys) (interchain with K-? in acceptor proteins)). Positions 93-110 are excised as a propeptide; sequence TASRASVPTPSHFPDICY.

Belongs to the ubiquitin family. SUMO subfamily. Interacts with SAE2 and UBE2I. Covalently attached to a number of proteins. Interacts with USP25 (via ts SIM domain); the interaction sumoylates USP25 and inhibits its ubiquitin hydrolyzing activity. Interacts with BMAL1. Polymeric chains can be formed through Lys-11 cross-linking. Post-translationally, cleavage of precursor form by SENP1, SENP2 or SENP5 is necessary for function.

The protein localises to the cytoplasm. Its subcellular location is the nucleus. It is found in the PML body. Ubiquitin-like protein which can be covalently attached to target lysines either as a monomer or as a lysine-linked polymer. Does not seem to be involved in protein degradation and may function as an antagonist of ubiquitin in the degradation process. Plays a role in a number of cellular processes such as nuclear transport, DNA replication and repair, mitosis and signal transduction. Covalent attachment to its substrates requires prior activation by the E1 complex SAE1-SAE2 and linkage to the E2 enzyme UBE2I, and can be promoted by an E3 ligase such as PIAS1-4, RANBP2 or CBX4. Plays a role in the regulation of sumoylation status of SETX. In Rattus norvegicus (Rat), this protein is Small ubiquitin-related modifier 3 (Sumo3).